The following is a 422-amino-acid chain: Cystine lyase CORI3 (422 aa).

Belongs to the class-I pyridoxal-phosphate-dependent aminotransferase family. In terms of assembly, homodimer. Requires pyridoxal 5'-phosphate as cofactor. In terms of tissue distribution, expressed in cotyledons, sepals, pistils, flower buds, phloem companion cells and vascular tissues of petiole, leaf, filament and fruit.

It catalyses the reaction L-cystine + H2O = S-sulfanyl-L-cysteine + pyruvate + NH4(+). Possesses cystine lyase activity in vitro. Does not possess tyrosine aminotransferase, alanine aminotransferase, aspartate aminotransferase and tryptophan aminotransferase activities. In Arabidopsis thaliana (Mouse-ear cress), this protein is Cystine lyase CORI3.